Consider the following 469-residue polypeptide: Bifunctional protein GlmU (469 aa).

Positions Met-1–Arg-237 are pyrophosphorylase. UDP-N-acetyl-alpha-D-glucosamine contacts are provided by residues Leu-12–Gly-15, Lys-26, Gln-78, Gly-83–Thr-84, Ser-105–Asp-107, Gly-144, Glu-162, Asn-177, and Asn-235. Asp-107 provides a ligand contact to Mg(2+). Asn-235 is a Mg(2+) binding site. The segment at Gln-238 to Ala-258 is linker. An N-acetyltransferase region spans residues Gly-259 to Lys-469. UDP-N-acetyl-alpha-D-glucosamine contacts are provided by Arg-341 and Lys-359. His-371 (proton acceptor) is an active-site residue. Tyr-374 and Asn-385 together coordinate UDP-N-acetyl-alpha-D-glucosamine. Residues Ala-388, Asn-394–Tyr-395, Ser-413, Ala-431, and Arg-448 contribute to the acetyl-CoA site.

This sequence in the N-terminal section; belongs to the N-acetylglucosamine-1-phosphate uridyltransferase family. It in the C-terminal section; belongs to the transferase hexapeptide repeat family. Homotrimer. Mg(2+) is required as a cofactor.

The protein localises to the cytoplasm. The catalysed reaction is alpha-D-glucosamine 1-phosphate + acetyl-CoA = N-acetyl-alpha-D-glucosamine 1-phosphate + CoA + H(+). The enzyme catalyses N-acetyl-alpha-D-glucosamine 1-phosphate + UTP + H(+) = UDP-N-acetyl-alpha-D-glucosamine + diphosphate. The protein operates within nucleotide-sugar biosynthesis; UDP-N-acetyl-alpha-D-glucosamine biosynthesis; N-acetyl-alpha-D-glucosamine 1-phosphate from alpha-D-glucosamine 6-phosphate (route II): step 2/2. It participates in nucleotide-sugar biosynthesis; UDP-N-acetyl-alpha-D-glucosamine biosynthesis; UDP-N-acetyl-alpha-D-glucosamine from N-acetyl-alpha-D-glucosamine 1-phosphate: step 1/1. Its pathway is bacterial outer membrane biogenesis; LPS lipid A biosynthesis. Its function is as follows. Catalyzes the last two sequential reactions in the de novo biosynthetic pathway for UDP-N-acetylglucosamine (UDP-GlcNAc). The C-terminal domain catalyzes the transfer of acetyl group from acetyl coenzyme A to glucosamine-1-phosphate (GlcN-1-P) to produce N-acetylglucosamine-1-phosphate (GlcNAc-1-P), which is converted into UDP-GlcNAc by the transfer of uridine 5-monophosphate (from uridine 5-triphosphate), a reaction catalyzed by the N-terminal domain. The sequence is that of Bifunctional protein GlmU from Koribacter versatilis (strain Ellin345).